The following is a 1191-amino-acid chain: MNELTGQLVQYGQHRQRRSFARIKEVLELPNLIEIQTASYEWFLEEGLREMFRDISPIEDFTGNLSLEFIDYSLGDPKYDVDECKERDVTYAAPLRVKVRLYNKETDEVKEQDVFMGDFPLMTETGTFIINGAERVIVSQLVRSPSVYFHDKTDKNGKKGFGATVIPNRGAWLEYETDAKDVVYVRIDRTRKLPVTVLLRALGFGSDQEIIDIIGDNEYLRNTLEKDNSESTEKALLEIYERLRPGEPPTVESAKSLLYSRFFDAKRYDLANVGRYKMNKKLHIKNRLFNQTIAETLVDPETGEILVEKGTVLDRRTLDKILPYLEDSSKGIGFRTLSQVGGVLEDDVTIQSIKIYAPKDEAQKEINIISNAYIDEEVKNITPADVLSSVSYFFNLLYQVGATDDIDHLGNRRLRSVGELLQNQFRIGLSRMERVVRERMSINDTAAIVPQQLINIRPVIASIKEFFGSSQLSQFMDQTNPLAELTHKRRLSALGPGGLTRERAGFEVRDVHYSHYGRMCPIETPEGPNIGLINSLSSFAKVNKFGFIETPYRRIDHETGQVTDQIDYLTADEEDNYYVAQANSPLNPDGSFANDEVVGRFRGDNTVFNKAQMDYMDVSPKQVVSAATACIPFLENDDSNRALMGANMQRQAVPLLNPEAPFVGTGMEHVDARDSGAAVVAKYDGIVEHVEARSIHVRRIEVVDGKEVKGDLTKYKLQKFIRSNQGTSYNQRPLVKVGERVKPRDILADGPSMEKGELALGRNVLVAFMTWNGFNYEDAVIMSERLVKDDVYTSVHIEEYESESRDTKLGPEEITRDIPNVGEDALRNLDERGIIRIGAEVRDGDILVGKVTPKGVTELTAEERLLHAIFGEKAREVRDTSLRVPHGAGGIILDVKVFNREDGDELPPGVNQLVRAYIVQKRKIRVGDKMAGRHGNKGVISRILPEEDMPFMPDGTPVDIMLNPLGVPSRMNIGQVLELHLGMASRYLGVHMATPVFDGANEEDVWETMEEAGMNRDGKTILYDGRSGEPFDNRVSVGIMYMIKLAHMVDDKLHARSTGPYSLVTQQPLGGKAQFGGQRFGEMEVWALEAYGAAYTLQEILTVKSDDVVGRVKTYEAIVKGESVPEPGVPESFKVLIKELQSLGMDVKMLTVNDEEVELRDLDEEEDLQPADALNIAPQPDTEEEPVESFE.

The disordered stretch occupies residues 1164–1191 (EEEDLQPADALNIAPQPDTEEEPVESFE). Residues 1181 to 1191 (DTEEEPVESFE) are compositionally biased toward acidic residues.

The protein belongs to the RNA polymerase beta chain family. The RNAP catalytic core consists of 2 alpha, 1 beta, 1 beta' and 1 omega subunit. When a sigma factor is associated with the core the holoenzyme is formed, which can initiate transcription.

The enzyme catalyses RNA(n) + a ribonucleoside 5'-triphosphate = RNA(n+1) + diphosphate. Its function is as follows. DNA-dependent RNA polymerase catalyzes the transcription of DNA into RNA using the four ribonucleoside triphosphates as substrates. The polypeptide is DNA-directed RNA polymerase subunit beta (Lysinibacillus sphaericus (strain C3-41)).